A 418-amino-acid polypeptide reads, in one-letter code: Histidine--tRNA ligase (418 aa).

It belongs to the class-II aminoacyl-tRNA synthetase family. In terms of assembly, homodimer.

It localises to the cytoplasm. The enzyme catalyses tRNA(His) + L-histidine + ATP = L-histidyl-tRNA(His) + AMP + diphosphate + H(+). The sequence is that of Histidine--tRNA ligase from Dehalococcoides mccartyi (strain ATCC BAA-2266 / KCTC 15142 / 195) (Dehalococcoides ethenogenes (strain 195)).